The chain runs to 291 residues: NAD kinase (291 aa).

Aspartate 73 serves as the catalytic Proton acceptor. Residues 73–74 (DG), 147–148 (ND), arginine 175, aspartate 177, and glutamine 246 contribute to the NAD(+) site.

This sequence belongs to the NAD kinase family. The cofactor is a divalent metal cation.

The protein resides in the cytoplasm. It carries out the reaction NAD(+) + ATP = ADP + NADP(+) + H(+). In terms of biological role, involved in the regulation of the intracellular balance of NAD and NADP, and is a key enzyme in the biosynthesis of NADP. Catalyzes specifically the phosphorylation on 2'-hydroxyl of the adenosine moiety of NAD to yield NADP. This chain is NAD kinase, found in Laribacter hongkongensis (strain HLHK9).